A 266-amino-acid polypeptide reads, in one-letter code: Putative carbamate hydrolase RutD (266 aa).

This sequence belongs to the AB hydrolase superfamily. Hydrolase RutD family.

The catalysed reaction is carbamate + 2 H(+) = NH4(+) + CO2. Functionally, involved in pyrimidine catabolism. May facilitate the hydrolysis of carbamate, a reaction that can also occur spontaneously. This is Putative carbamate hydrolase RutD from Escherichia coli (strain B / BL21-DE3).